A 506-amino-acid chain; its full sequence is Histidine ammonia-lyase (506 aa).

The segment at residues 144-146 (ASG) is a cross-link (5-imidazolinone (Ala-Gly)). S145 carries the 2,3-didehydroalanine (Ser) modification.

The protein belongs to the PAL/histidase family. In terms of processing, contains an active site 4-methylidene-imidazol-5-one (MIO), which is formed autocatalytically by cyclization and dehydration of residues Ala-Ser-Gly.

It is found in the cytoplasm. The enzyme catalyses L-histidine = trans-urocanate + NH4(+). The protein operates within amino-acid degradation; L-histidine degradation into L-glutamate; N-formimidoyl-L-glutamate from L-histidine: step 1/3. The sequence is that of Histidine ammonia-lyase from Legionella pneumophila subsp. pneumophila (strain Philadelphia 1 / ATCC 33152 / DSM 7513).